The chain runs to 175 residues: Peptide methionine sulfoxide reductase MsrA (175 aa).

Cys10 is a catalytic residue.

This sequence belongs to the MsrA Met sulfoxide reductase family.

The enzyme catalyses L-methionyl-[protein] + [thioredoxin]-disulfide + H2O = L-methionyl-(S)-S-oxide-[protein] + [thioredoxin]-dithiol. It catalyses the reaction [thioredoxin]-disulfide + L-methionine + H2O = L-methionine (S)-S-oxide + [thioredoxin]-dithiol. Has an important function as a repair enzyme for proteins that have been inactivated by oxidation. Catalyzes the reversible oxidation-reduction of methionine sulfoxide in proteins to methionine. The chain is Peptide methionine sulfoxide reductase MsrA from Psychrobacter sp. (strain PRwf-1).